Reading from the N-terminus, the 294-residue chain is tRNA dimethylallyltransferase (294 aa).

9–16 (GPTASGKS) serves as a coordination point for ATP. 11–16 (TASGKS) provides a ligand contact to substrate. Positions 155 to 159 (QRVIR) are interaction with substrate tRNA.

Belongs to the IPP transferase family. As to quaternary structure, monomer. Mg(2+) is required as a cofactor.

It carries out the reaction adenosine(37) in tRNA + dimethylallyl diphosphate = N(6)-dimethylallyladenosine(37) in tRNA + diphosphate. In terms of biological role, catalyzes the transfer of a dimethylallyl group onto the adenine at position 37 in tRNAs that read codons beginning with uridine, leading to the formation of N6-(dimethylallyl)adenosine (i(6)A). The polypeptide is tRNA dimethylallyltransferase (Leuconostoc citreum (strain KM20)).